Here is a 442-residue protein sequence, read N- to C-terminus: Histidinol dehydrogenase (442 aa).

NAD(+) is bound by residues tyrosine 142, glutamine 204, and asparagine 227. 3 residues coordinate substrate: serine 250, glutamine 272, and histidine 275. 2 residues coordinate Zn(2+): glutamine 272 and histidine 275. Residues glutamate 340 and histidine 341 each act as proton acceptor in the active site. Residues histidine 341, aspartate 374, glutamate 428, and histidine 433 each contribute to the substrate site. Aspartate 374 is a binding site for Zn(2+). Zn(2+) is bound at residue histidine 433.

Belongs to the histidinol dehydrogenase family. Requires Zn(2+) as cofactor.

It catalyses the reaction L-histidinol + 2 NAD(+) + H2O = L-histidine + 2 NADH + 3 H(+). It functions in the pathway amino-acid biosynthesis; L-histidine biosynthesis; L-histidine from 5-phospho-alpha-D-ribose 1-diphosphate: step 9/9. Functionally, catalyzes the sequential NAD-dependent oxidations of L-histidinol to L-histidinaldehyde and then to L-histidine. This Prochlorococcus marinus (strain MIT 9313) protein is Histidinol dehydrogenase.